A 390-amino-acid chain; its full sequence is 3,5-dihydroxyphenylacetyl-CoA synthase (390 aa).

Cysteine 173 is a catalytic residue.

Belongs to the thiolase-like superfamily. Chalcone/stilbene synthases family.

It carries out the reaction 4 malonyl-CoA + 4 H(+) = (3,5-dihydroxyphenyl)acetyl-CoA + 4 CO2 + 3 CoA + H2O. Its pathway is antibiotic biosynthesis; vancomycin biosynthesis. Involved in the biosynthesis of the nonproteinogenic amino acid monomer (S)-3,5-dihydroxyphenylglycine (Dpg) responsible of the production of vancomycin and teicoplanin antibiotics. Catalyzes the Claisen condensation of four molecules of malonyl-CoA to yield 3,5-dihydroxyphenylacetyl-CoA (DPA-CoA) and three free coenzyme A (CoA). DpgA requires the presence of the dehydratases DpgB and DpgD to facilitate the aromatization of the DPA-S-DgpA or DPA-S-CoA intermediate. In Streptomyces toyocaensis, this protein is 3,5-dihydroxyphenylacetyl-CoA synthase.